The chain runs to 2635 residues: Protein unc-79 homolog (2635 aa).

Serine 754 and serine 758 each carry phosphoserine. 6 disordered regions span residues 907–929 (GPEGEEEENPASKHGENPGNCTE), 1538–1575 (IAQRPNDPGRSRQNSATRPDNSEIPENPAMEGFPDARR), 1607–1678 (LIDL…SVLS), 1693–1832 (SKDF…FKIQ), 1863–1909 (LGEQ…TQYR), and 1929–1950 (LEHQSSAPHNISNWDTEQIQPG). The segment covering 1666 to 1678 (SSPSVPSHPSVLS) has biased composition (low complexity). Over residues 1699 to 1713 (KDSGNNQSAGNTDSA) the composition is skewed to polar residues. Positions 1761–1775 (LDDHPDPGTEGEKPG) are enriched in basic and acidic residues. Composition is skewed to polar residues over residues 1897–1909 (ETSSHSSISTQYR) and 1929–1947 (LEHQSSAPHNISNWDTEQI). 2 helical membrane passes run 2223–2243 (LLSFVIQNAVFTLAYLVELCG) and 2466–2486 (VLHMCSLFHAFIFAQLWTVYC).

It belongs to the unc-79 family. As to quaternary structure, NALCN complex consists of NALCN and auxiliary subunits, UNC79, UNC80 and NACL1. These auxiliary subunits are essential for the NALCN channel function. UNC80 bridges NALCN to UNC79.

It is found in the cell membrane. Functionally, auxiliary subunit of the NALCN sodium channel complex, a voltage-gated ion channel responsible for the resting Na(+) permeability that controls neuronal excitability. Activated by neuropeptides substance P, neurotensin, and extracellular calcium that regulates neuronal excitability by controlling the sizes of NALCN-dependent sodium-leak current. The protein is Protein unc-79 homolog (UNC79) of Homo sapiens (Human).